We begin with the raw amino-acid sequence, 197 residues long: MSDDLNDFFAKKDSTKKVVKKPTSTTPKVVVKPVSPTTPVVSPTTVTSPVSPTTPVVEPKKVVDLSQLNKSKDTTPVVDVKESKTEQINIPTMRWADKNEQTTTTTQTKVYKNYPSLKKEETKVDEDDDQIYEDKEEEKEVKKDEENSTADEEPVKKSNKKVAPKQKKKSKQELEAEALMASLGIIDEKPVPKQKKK.

Disordered regions lie at residues 1–30 (MSDDLNDFFAKKDSTKKVVKKPTSTTPKVV) and 115–174 (PSLK…KQEL). A compositionally biased stretch (low complexity) spans 21–30 (KPTSTTPKVV). Positions 123-137 (KVDEDDDQIYEDKEE) are enriched in acidic residues. Over residues 157 to 170 (KSNKKVAPKQKKKS) the composition is skewed to basic residues.

This is an uncharacterized protein from Dictyostelium discoideum (Social amoeba).